Reading from the N-terminus, the 396-residue chain is ATP phosphoribosyltransferase regulatory subunit (396 aa).

The protein belongs to the class-II aminoacyl-tRNA synthetase family. HisZ subfamily. Heteromultimer composed of HisG and HisZ subunits.

It localises to the cytoplasm. Its pathway is amino-acid biosynthesis; L-histidine biosynthesis; L-histidine from 5-phospho-alpha-D-ribose 1-diphosphate: step 1/9. Functionally, required for the first step of histidine biosynthesis. May allow the feedback regulation of ATP phosphoribosyltransferase activity by histidine. This Cellvibrio japonicus (strain Ueda107) (Pseudomonas fluorescens subsp. cellulosa) protein is ATP phosphoribosyltransferase regulatory subunit.